The primary structure comprises 114 residues: Large ribosomal subunit protein uL22 (114 aa).

It belongs to the universal ribosomal protein uL22 family. Part of the 50S ribosomal subunit.

This protein binds specifically to 23S rRNA; its binding is stimulated by other ribosomal proteins, e.g. L4, L17, and L20. It is important during the early stages of 50S assembly. It makes multiple contacts with different domains of the 23S rRNA in the assembled 50S subunit and ribosome. Functionally, the globular domain of the protein is located near the polypeptide exit tunnel on the outside of the subunit, while an extended beta-hairpin is found that lines the wall of the exit tunnel in the center of the 70S ribosome. The protein is Large ribosomal subunit protein uL22 of Streptococcus sanguinis (strain SK36).